Consider the following 309-residue polypeptide: Aspartate carbamoyltransferase catalytic subunit (309 aa).

Positions 57 and 58 each coordinate carbamoyl phosphate. Lysine 86 provides a ligand contact to L-aspartate. Residues arginine 107, histidine 135, and glutamine 138 each contribute to the carbamoyl phosphate site. Residues arginine 168 and arginine 229 each contribute to the L-aspartate site. Residues leucine 269 and proline 270 each contribute to the carbamoyl phosphate site.

It belongs to the aspartate/ornithine carbamoyltransferase superfamily. ATCase family. In terms of assembly, heterooligomer of catalytic and regulatory chains.

It catalyses the reaction carbamoyl phosphate + L-aspartate = N-carbamoyl-L-aspartate + phosphate + H(+). The protein operates within pyrimidine metabolism; UMP biosynthesis via de novo pathway; (S)-dihydroorotate from bicarbonate: step 2/3. Its function is as follows. Catalyzes the condensation of carbamoyl phosphate and aspartate to form carbamoyl aspartate and inorganic phosphate, the committed step in the de novo pyrimidine nucleotide biosynthesis pathway. The sequence is that of Aspartate carbamoyltransferase catalytic subunit from Methanopyrus kandleri (strain AV19 / DSM 6324 / JCM 9639 / NBRC 100938).